A 145-amino-acid chain; its full sequence is Fatty acid-binding protein homolog 4 (145 aa).

This sequence belongs to the calycin superfamily. Fatty-acid binding protein (FABP) family.

This Caenorhabditis elegans protein is Fatty acid-binding protein homolog 4 (lbp-4).